The sequence spans 351 residues: Porphobilinogen deaminase (351 aa).

At cysteine 242 the chain carries S-(dipyrrolylmethanemethyl)cysteine.

It belongs to the HMBS family. As to quaternary structure, monomer. Dipyrromethane serves as cofactor.

The catalysed reaction is 4 porphobilinogen + H2O = hydroxymethylbilane + 4 NH4(+). It participates in porphyrin-containing compound metabolism; protoporphyrin-IX biosynthesis; coproporphyrinogen-III from 5-aminolevulinate: step 2/4. In terms of biological role, tetrapolymerization of the monopyrrole PBG into the hydroxymethylbilane pre-uroporphyrinogen in several discrete steps. In Rickettsia peacockii (strain Rustic), this protein is Porphobilinogen deaminase.